We begin with the raw amino-acid sequence, 67 residues long: Probable Sec-independent protein translocase protein TatE (67 aa).

The helical transmembrane segment at 1–21 (MEGISLAKLLIVGALIVLLFG) threads the bilayer. The disordered stretch occupies residues 43-67 (MNDDSDATSKTASEDKNAGQAVHKE). The span at 54–67 (ASEDKNAGQAVHKE) shows a compositional bias: basic and acidic residues.

The protein belongs to the TatA/E family. TatE subfamily.

It localises to the cell inner membrane. In terms of biological role, part of the twin-arginine translocation (Tat) system that transports large folded proteins containing a characteristic twin-arginine motif in their signal peptide across membranes. TatE shares overlapping functions with TatA. The chain is Probable Sec-independent protein translocase protein TatE from Erwinia tasmaniensis (strain DSM 17950 / CFBP 7177 / CIP 109463 / NCPPB 4357 / Et1/99).